Here is a 268-residue protein sequence, read N- to C-terminus: uncharacterized protein (268 aa).

The protein to M.tuberculosis Rv0025 and Rv0026.

This is an uncharacterized protein from Mycobacterium tuberculosis (strain CDC 1551 / Oshkosh).